We begin with the raw amino-acid sequence, 780 residues long: Lethal(3)malignant brain tumor-like protein 3 (780 aa).

The interval methionine 1–tryptophan 64 is interaction with RBPJ. Required for transcription repressor activity on Notch target genes. A disordered region spans residues aspartate 149–leucine 220. Acidic residues-rich tracts occupy residues aspartate 157–aspartate 166 and glutamate 185–methionine 194. MBT repeat units follow at residues tryptophan 232 to proline 332, phenylalanine 340 to proline 439, and phenylalanine 448 to proline 543. The CCHHC-type; degenerate zinc-finger motif lies at leucine 549–aspartate 593. A disordered region spans residues proline 597–glutamine 665. Positions leucine 600–threonine 710 are interaction with DCAF5. At serine 608 the chain carries Phosphoserine. Residue lysine 637 forms a Glycyl lysine isopeptide (Lys-Gly) (interchain with G-Cter in SUMO2) linkage. The span at arginine 643–proline 661 shows a compositional bias: basic and acidic residues. Lysine 704 is covalently cross-linked (Glycyl lysine isopeptide (Lys-Gly) (interchain with G-Cter in SUMO2)). An SAM domain is found at tryptophan 708–alanine 772.

As to quaternary structure, interacts with RNF2. Interacts (via SAM domain) with SAMD1 (via SAM domain); the interaction mediates L3MBTL3 binding to chromatin. Interacts with RBPJ; the interaction is required for L3MBTL3 localization to chromatin and is impaired by Notch-derived peptides containing the intracellular domain (NICD). Interacts (via SAM domain) with KDM1A. Interacts with DCAF5. Interacts with DNMT1. Interacts with E2F1. Interacts with SOX2. Interacts with SFMBT1.

It is found in the nucleus. Its function is as follows. Is a negative regulator of Notch target genes expression, required for RBPJ-mediated transcriptional repression. It recruits KDM1A to Notch-responsive elements and promotes KDM1A-mediated H3K4me demethylation. Involved in the regulation of ubiquitin-dependent degradation of a set of methylated non-histone proteins, including SOX2, DNMT1 and E2F1. It acts as an adapter recruiting the CRL4-DCAF5 E3 ubiquitin ligase complex to methylated target proteins. Required for normal maturation of myeloid progenitor cells. The sequence is that of Lethal(3)malignant brain tumor-like protein 3 from Homo sapiens (Human).